The sequence spans 312 residues: Acetylglutamate kinase (312 aa).

Substrate contacts are provided by residues 77 to 78, Arg-99, and Asn-192; that span reads GG.

This sequence belongs to the acetylglutamate kinase family. ArgB subfamily.

Its subcellular location is the cytoplasm. The catalysed reaction is N-acetyl-L-glutamate + ATP = N-acetyl-L-glutamyl 5-phosphate + ADP. It participates in amino-acid biosynthesis; L-arginine biosynthesis; N(2)-acetyl-L-ornithine from L-glutamate: step 2/4. Catalyzes the ATP-dependent phosphorylation of N-acetyl-L-glutamate. The sequence is that of Acetylglutamate kinase from Synechococcus sp. (strain JA-2-3B'a(2-13)) (Cyanobacteria bacterium Yellowstone B-Prime).